Here is a 358-residue protein sequence, read N- to C-terminus: Aminodeoxyfutalosine deaminase (358 aa).

Positions 32 and 34 each coordinate Zn(2+). The substrate site is built by Arg-87, Asp-154, and Gly-188. His-215 is a Zn(2+) binding site. Residue Glu-218 is the Proton donor of the active site. Asp-296 contributes to the Zn(2+) binding site.

The protein belongs to the metallo-dependent hydrolases superfamily. Adenosine and AMP deaminases family. Zn(2+) is required as a cofactor.

The catalysed reaction is 6-amino-6-deoxyfutalosine + H2O + H(+) = futalosine + NH4(+). It functions in the pathway quinol/quinone metabolism; menaquinone biosynthesis. Functionally, catalyzes the deamination of aminodeoxyfutalosine (AFL) into futalosine (FL), a step in the biosynthesis of menaquinone (MK, vitamin K2). To a lesser extent, can also deaminate adenosine, 5'-methylthioadenosine, 5'-deoxyadenosine, and 2'-deoxyadenosine. This Streptomyces avermitilis (strain ATCC 31267 / DSM 46492 / JCM 5070 / NBRC 14893 / NCIMB 12804 / NRRL 8165 / MA-4680) protein is Aminodeoxyfutalosine deaminase (add2).